Reading from the N-terminus, the 248-residue chain is Adenosylcobinamide-GDP ribazoletransferase (248 aa).

Transmembrane regions (helical) follow at residues 24–44 (EINLKKGSALLPFVGVIIGAW), 70–90 (VIITGGFHVDALADTADGLFS), 106–126 (VGANGVIAICFYFLFYGALFL), 134–154 (ICWLFFVLPIVAKGVTMLLFA), 168–188 (IFLGVPWWPIVIAQVIVLAVL), 189–209 (GLFFSYVGVIAYVGVILFTII), and 228–248 (AGGQMGQLICLFCLVLLWGLV).

Belongs to the CobS family. Mg(2+) is required as a cofactor.

The protein localises to the cell membrane. It carries out the reaction alpha-ribazole + adenosylcob(III)inamide-GDP = adenosylcob(III)alamin + GMP + H(+). The enzyme catalyses alpha-ribazole 5'-phosphate + adenosylcob(III)inamide-GDP = adenosylcob(III)alamin 5'-phosphate + GMP + H(+). It functions in the pathway cofactor biosynthesis; adenosylcobalamin biosynthesis; adenosylcobalamin from cob(II)yrinate a,c-diamide: step 7/7. Joins adenosylcobinamide-GDP and alpha-ribazole to generate adenosylcobalamin (Ado-cobalamin). Also synthesizes adenosylcobalamin 5'-phosphate from adenosylcobinamide-GDP and alpha-ribazole 5'-phosphate. In Listeria monocytogenes serovar 1/2a (strain ATCC BAA-679 / EGD-e), this protein is Adenosylcobinamide-GDP ribazoletransferase.